Here is a 427-residue protein sequence, read N- to C-terminus: Glutamate-1-semialdehyde 2,1-aminomutase (427 aa).

Position 267 is an N6-(pyridoxal phosphate)lysine (lysine 267).

The protein belongs to the class-III pyridoxal-phosphate-dependent aminotransferase family. HemL subfamily. In terms of assembly, homodimer. It depends on pyridoxal 5'-phosphate as a cofactor.

The protein localises to the cytoplasm. The catalysed reaction is (S)-4-amino-5-oxopentanoate = 5-aminolevulinate. It functions in the pathway porphyrin-containing compound metabolism; protoporphyrin-IX biosynthesis; 5-aminolevulinate from L-glutamyl-tRNA(Glu): step 2/2. In Geotalea uraniireducens (strain Rf4) (Geobacter uraniireducens), this protein is Glutamate-1-semialdehyde 2,1-aminomutase.